The primary structure comprises 204 residues: Large ribosomal subunit protein bL25 (204 aa).

It belongs to the bacterial ribosomal protein bL25 family. CTC subfamily. As to quaternary structure, part of the 50S ribosomal subunit; part of the 5S rRNA/L5/L18/L25 subcomplex. Contacts the 5S rRNA. Binds to the 5S rRNA independently of L5 and L18.

Functionally, this is one of the proteins that binds to the 5S RNA in the ribosome where it forms part of the central protuberance. This Pseudoalteromonas translucida (strain TAC 125) protein is Large ribosomal subunit protein bL25.